A 199-amino-acid chain; its full sequence is 3-isopropylmalate dehydratase small subunit (199 aa).

This sequence belongs to the LeuD family. LeuD type 1 subfamily. In terms of assembly, heterodimer of LeuC and LeuD.

The enzyme catalyses (2R,3S)-3-isopropylmalate = (2S)-2-isopropylmalate. It participates in amino-acid biosynthesis; L-leucine biosynthesis; L-leucine from 3-methyl-2-oxobutanoate: step 2/4. Its function is as follows. Catalyzes the isomerization between 2-isopropylmalate and 3-isopropylmalate, via the formation of 2-isopropylmaleate. The protein is 3-isopropylmalate dehydratase small subunit of Leifsonia xyli subsp. xyli (strain CTCB07).